The sequence spans 174 residues: NADH-ubiquinone oxidoreductase chain 6 (174 aa).

6 helical membrane passes run 1–21, 24–44, 47–67, 86–106, 111–131, and 151–171; these read MTYA…GFSS, SPIY…AVIL, GGGY…MVVF, VEVL…VLWV, GVVV…EGEG, and WLVV…IEIA.

It belongs to the complex I subunit 6 family. In terms of assembly, core subunit of respiratory chain NADH dehydrogenase (Complex I) which is composed of 45 different subunits.

It localises to the mitochondrion inner membrane. It catalyses the reaction a ubiquinone + NADH + 5 H(+)(in) = a ubiquinol + NAD(+) + 4 H(+)(out). In terms of biological role, core subunit of the mitochondrial membrane respiratory chain NADH dehydrogenase (Complex I) which catalyzes electron transfer from NADH through the respiratory chain, using ubiquinone as an electron acceptor. Essential for the catalytic activity and assembly of complex I. The protein is NADH-ubiquinone oxidoreductase chain 6 (MT-ND6) of Pongo abelii (Sumatran orangutan).